Here is a 182-residue protein sequence, read N- to C-terminus: Inorganic pyrophosphatase (182 aa).

Residues lysine 30, arginine 44, and tyrosine 56 each contribute to the substrate site. Mg(2+)-binding residues include aspartate 66, aspartate 71, and aspartate 103. Residue tyrosine 142 participates in substrate binding.

The protein belongs to the PPase family. As to quaternary structure, homohexamer. It depends on Mg(2+) as a cofactor.

It is found in the cytoplasm. The catalysed reaction is diphosphate + H2O = 2 phosphate + H(+). Catalyzes the hydrolysis of inorganic pyrophosphate (PPi) forming two phosphate ions. The chain is Inorganic pyrophosphatase from Buchnera aphidicola subsp. Acyrthosiphon pisum (strain APS) (Acyrthosiphon pisum symbiotic bacterium).